Reading from the N-terminus, the 908-residue chain is Glutamate receptor ionotropic, kainate 2 (908 aa).

Positions 1-31 (MKIISPVLSNLVFSRSIKVLLCLLWIGYSQG) are cleaved as a signal peptide. Residues 32–561 (TTHVLRFGGI…VFSFLNPLSP (530 aa)) lie on the Extracellular side of the membrane. Residues Asn-67, Asn-73, Asn-275, Asn-378, Asn-412, Asn-423, and Asn-430 are each glycosylated (N-linked (GlcNAc...) asparagine). The cysteines at positions 96 and 347 are disulfide-linked. Pro-516, Ala-518, and Arg-523 together coordinate L-glutamate. N-linked (GlcNAc...) asparagine glycosylation is present at Asn-546. A helical membrane pass occupies residues 562 to 582 (DIWMYILLAYLGVSCVLFVIA). The Cytoplasmic portion of the chain corresponds to 583-638 (RFSPYEWYNPHPCNPDSDVVENNFTLLNSFWFGVGALMQQGSELMPKALSTRIVGG). The chain crosses the membrane as a helical span at residues 639–659 (IWWFFTLIIISSYTANLAAFL). Over 660–819 (TVERMESPID…KEASALGVQN (160 aa)) the chain is Extracellular. L-glutamate-binding residues include Ala-689, Thr-690, and Glu-738. An intrachain disulfide couples Cys-750 to Cys-804. Residue Asn-751 is glycosylated (N-linked (GlcNAc...) asparagine). The chain crosses the membrane as a helical span at residues 820–840 (IGGIFIVLAAGLVLSVFVAVG). Over 841–908 (EFLYKSKKNA…RRLPGKETMA (68 aa)) the chain is Cytoplasmic. Residues Ser-846 and Ser-868 each carry the phosphoserine; by PKC modification. Residue Lys-886 forms a Glycyl lysine isopeptide (Lys-Gly) (interchain with G-Cter in SUMO1) linkage.

It belongs to the glutamate-gated ion channel (TC 1.A.10.1) family. GRIK2 subfamily. As to quaternary structure, homotetramer and heterotetramer with GRIK5. Tetramers may be formed by the dimerization of dimers. Assembles into a kainate-gated homomeric channel that does not bind AMPA. Can form functional heteromeric receptors with GRIK3. Forms a heteromeric complex with GRIK4 and GRIK5. Interacts with DLG4. Interacts (via C-terminus) with KLHL17 (via kelch repeats); the interaction targets GRIK2 for degradation via ubiquitin-proteasome pathway. Interacts with NETO2. Sumoylation mediates kainate receptor-mediated endocytosis and regulates synaptic transmission. Sumoylation is enhanced by PIAS3 and desumoylated by SENP1. In terms of processing, ubiquitinated. Ubiquitination regulates the GRIK2 levels at the synapse by leading kainate receptor degradation through proteasome. Post-translationally, phosphorylated by PKC at Ser-868 upon agonist activation, this directly enhance sumoylation. Expressed in the hippocampal mossy fiber synapses (at protein level). Most abundant in the cerebellum and the hypothalamus. Expressed in a proportion of dorsal root ganglion (DRG) neurons (13.6%); predominantly small diameter DRG neurons (75%) with the remainder expressed in medium diameter DRG neurons.

The protein localises to the cell membrane. Its subcellular location is the postsynaptic cell membrane. It catalyses the reaction Ca(2+)(in) = Ca(2+)(out). The catalysed reaction is Na(+)(in) = Na(+)(out). With respect to regulation, cold receptor activity activated by temperatures between 10-19 degrees Celsius. Its function is as follows. Ionotropic glutamate receptor that functions as a cation-permeable ligand-gated ion channel, gated by L-glutamate and the glutamatergic agonist kainic acid. L-glutamate acts as an excitatory neurotransmitter at many synapses in the central nervous system. Binding of the excitatory neurotransmitter L-glutamate induces a conformation change, leading to the opening of the cation channel, and thereby converts the chemical signal to an electrical impulse. The receptor then desensitizes rapidly and enters a transient inactive state, characterized by the presence of bound agonist. Modulates cell surface expression of NETO2. In association with GRIK3, involved in presynaptic facilitation of glutamate release at hippocampal mossy fiber synapses. Independent of its ionotropic glutamate receptor activity, acts as a thermoreceptor conferring sensitivity to cold temperatures. Functions in dorsal root ganglion neurons. Functionally, ionotropic glutamate receptor that functions as a cation-permeable ligand-gated ion channel, gated by L-glutamate and the glutamatergic agonist kainic acid. The chain is Glutamate receptor ionotropic, kainate 2 (Grik2) from Mus musculus (Mouse).